We begin with the raw amino-acid sequence, 485 residues long: Glycogen synthase (485 aa).

Residue Lys-15 participates in ADP-alpha-D-glucose binding.

Belongs to the glycosyltransferase 1 family. Bacterial/plant glycogen synthase subfamily.

The catalysed reaction is [(1-&gt;4)-alpha-D-glucosyl](n) + ADP-alpha-D-glucose = [(1-&gt;4)-alpha-D-glucosyl](n+1) + ADP + H(+). It participates in glycan biosynthesis; glycogen biosynthesis. In terms of biological role, synthesizes alpha-1,4-glucan chains using ADP-glucose. The polypeptide is Glycogen synthase (Rhodospirillum rubrum (strain ATCC 11170 / ATH 1.1.1 / DSM 467 / LMG 4362 / NCIMB 8255 / S1)).